The chain runs to 131 residues: Large-conductance mechanosensitive channel (131 aa).

The next 3 membrane-spanning stretches (helical) occupy residues 8-28 (FAIRGNVIDLAVGVIIGGAFG), 30-50 (IVSSLVNDIIMPLVGLLLGGI), and 67-87 (GAFIQTVVDFLIIAFSIFLFV).

The protein belongs to the MscL family. In terms of assembly, homopentamer.

Its subcellular location is the cell membrane. Its function is as follows. Channel that opens in response to stretch forces in the membrane lipid bilayer. May participate in the regulation of osmotic pressure changes within the cell. The sequence is that of Large-conductance mechanosensitive channel from Geobacillus thermodenitrificans (strain NG80-2).